A 185-amino-acid polypeptide reads, in one-letter code: Large ribosomal subunit protein uL22 (185 aa).

Belongs to the universal ribosomal protein uL22 family. Part of the 50S ribosomal subunit.

Its function is as follows. This protein binds specifically to 23S rRNA. It makes multiple contacts with different domains of the 23S rRNA in the assembled 50S subunit and ribosome. Functionally, the globular domain of the protein is located near the polypeptide exit tunnel on the outside of the subunit, while an extended beta-hairpin is found that lines the wall of the exit tunnel in the center of the 70S ribosome. This is Large ribosomal subunit protein uL22 from Pyrobaculum neutrophilum (strain DSM 2338 / JCM 9278 / NBRC 100436 / V24Sta) (Thermoproteus neutrophilus).